The primary structure comprises 351 residues: Cell shape-determining protein MreB (351 aa).

ATP contacts are provided by residues 20–22, 169–171, 217–220, and 299–302; these read TAN, GGT, ERIK, and GGAL.

It belongs to the FtsA/MreB family. In terms of assembly, forms polymers.

It is found in the cytoplasm. Its function is as follows. Forms membrane-associated dynamic filaments that are essential for cell shape determination. Acts by regulating cell wall synthesis and cell elongation, and thus cell shape. A feedback loop between cell geometry and MreB localization may maintain elongated cell shape by targeting cell wall growth to regions of negative cell wall curvature. This is Cell shape-determining protein MreB from Pasteurella multocida (strain Pm70).